A 645-amino-acid chain; its full sequence is Transcription factor AN6788 (645 aa).

Positions 1-21 are disordered; it reads MPQKAQPQPRESPFKPARQQP. A DNA-binding region (zn(2)-C6 fungal-type) is located at residues 25–52; it reads CEECRKRKARCDRAKPQCGSCMMTGRVC. The span at 113 to 131 shows a compositional bias: basic and acidic residues; it reads PDFEPNSHPRHSQSHDRRQ. A disordered region spans residues 113–170; sequence PDFEPNSHPRHSQSHDRRQQSGPDSSPDTQHELPFLQSPPAARDADSAERALLPSPVS.

Its subcellular location is the nucleus. Transcription factors AN6788 and AN6790 act in tandem to regulate the expression of the non-reducing polyketide synthase pkfA from the aspernidine A biosynthesis cluster. They do not control the expression of the other genes involved in aspernidine A biosynthesis, nor do they regulate the expression of the highly reducing polyketide synthase AN6791 and the esterase AN6793 with which they are predicted to form a secondary metabolite biosynthesis cluster. The protein is Transcription factor AN6788 of Emericella nidulans (strain FGSC A4 / ATCC 38163 / CBS 112.46 / NRRL 194 / M139) (Aspergillus nidulans).